Here is a 392-residue protein sequence, read N- to C-terminus: Glycerophosphodiester phosphodiesterase GDPD5 (392 aa).

Positions 1–21 (MILTRCLPLIWLSLLTVCAAG) are cleaved as a signal peptide. The GP-PDE domain maps to 44 to 362 (PYNIAHRGSN…DFTGSLHNFQ (319 aa)). Asn120, Asn239, Asn260, and Asn329 each carry an N-linked (GlcNAc...) asparagine glycan.

It belongs to the glycerophosphoryl diester phosphodiesterase family. In terms of tissue distribution, expressed in roots, rosette and cauline leaves, stems, flowers and siliques.

The protein resides in the secreted. Its subcellular location is the cell wall. It localises to the vacuole. The catalysed reaction is a sn-glycero-3-phosphodiester + H2O = an alcohol + sn-glycerol 3-phosphate + H(+). This Arabidopsis thaliana (Mouse-ear cress) protein is Glycerophosphodiester phosphodiesterase GDPD5.